The chain runs to 71 residues: Ceratotoxin-A (71 aa).

The signal sequence occupies residues 1 to 23; it reads MANLKAVFLICIVAFIAFQCVVA. Propeptides lie at residues 24 to 35 and 65 to 71; these read EPAAEDSIVVKR and VAAGLVG.

Homomer of four to six subunits.

It is found in the secreted. In terms of biological role, female-specific peptides with potent activity against Gram-positive and Gram-negative bacteria. They have as well hemolytic activity. The protein is Ceratotoxin-A (CTXA2) of Ceratitis capitata (Mediterranean fruit fly).